The primary structure comprises 579 residues: SHC-transforming protein 1 (579 aa).

Met-1 is subject to N-acetylmethionine. Residues 1-137 (MDLLPPKPKY…QLGGEEWTRH (137 aa)) form a disordered region. Residues 16–44 (ESLSSLEEGASGSTPPEELPSPSASSLGP) are compositionally biased toward low complexity. Phosphoserine is present on residues Ser-36 and Ser-139. Lys-154 carries the post-translational modification N6-acetyllysine. One can recognise a PID domain in the interval 156 to 339 (MGPGVSYLVR…AGFDGSAWDE (184 aa)). Residues 337 to 357 (WDEEEEEPPDHQYYNDFPGKE) form a disordered region. The CH1 stretch occupies residues 340 to 483 (EEEEPPDHQY…SMAEQLQGEP (144 aa)). A phosphotyrosine mark is found at Tyr-349, Tyr-350, and Tyr-423. Positions 432–451 (ARQAGGGAGPPNPSLNGSAP) are disordered. Residue Ser-449 is modified to Phosphoserine. The region spanning 484–575 (WFHGKLSRRE…GSELCLQQPV (92 aa)) is the SH2 domain.

Interacts with CPNE3; this interaction may mediate the binding of CPNE3 with ERBB2. Interacts with the NPXY motif of tyrosine-phosphorylated IGF1R and INSR in vitro via the PID domain. Once activated, binds to GRB2. Interacts with tyrosine-phosphorylated DDR2 and CD3T. Interacts with the N-terminal region of APS. Interacts with GRB7 and KIT. Interacts with PTK2/FAK1. Interacts with phosphorylated LRP1 and IRS4. Interacts with FLT4 (tyrosine-phosphorylated). Interacts with PDGFRB (tyrosine-phosphorylated). Interacts with ERBB4. Interacts with TEK/TIE2 (tyrosine-phosphorylated). Interacts with ALK, GAB2, TRIM31, INPP5D/SHIP1 and INPPL1/SHIP2. Interacts with PTPN6/SHP (tyrosine phosphorylated). Identified in a complex containing FGFR4, NCAM1, CDH2, PLCG1, FRS2, SRC, SHC1, GAP43 and CTTN. Interacts with EPHB1 and GRB2; activates the MAPK/ERK cascade to regulate cell migration. Interacts with the Trk receptors NTRK1, NTRK2 and NTRK3; in a phosphotyrosine-dependent manner. Interacts with CEACAM1; this interaction is CEACAM1-phosphorylation-dependent and mediates interaction with EGFR or INSR resulting in decrease coupling of SHC1 to the MAPK3/ERK1-MAPK1/ERK2 pathway. Interacts (via PID domain) with PEAK1 (when phosphorylated at 'Tyr-1177'). Found in a complex with PPP1CA, PPP1CC, SHC1 and PEAK1. Phosphorylated in response to FLT4 signaling. Tyrosine phosphorylated by ligand-activated PDGFRB. May be tyrosine phosphorylated by activated PTK2/FAK1. Tyrosine phosphorylated by TEK/TIE2. Tyrosine phosphorylated by activated PTK2B/PYK2. Dephosphorylation by PTPN2 may regulate interaction with GRB2. Phosphorylated by activated epidermal growth factor receptor. Phosphorylated in response to KIT signaling. Isoform p47Shc and isoform p52Shc are phosphorylated on tyrosine residues of the Pro-rich domain. Isoform p66Shc is phosphorylated on Ser-36 by PRKCB upon treatment with insulin, hydrogen peroxide or irradiation with ultraviolet light. FLT3 signaling promotes tyrosine phosphorylation of isoform p47Shc and isoform p52Shc. Also tyrosine phosphorylated by ligand-activated ALK. As to expression, widely expressed. Expressed in neural stem cells but absent in mature neurons.

It localises to the cytoplasm. It is found in the cell junction. The protein resides in the focal adhesion. The protein localises to the mitochondrion matrix. Its subcellular location is the mitochondrion. In terms of biological role, signaling adapter that couples activated growth factor receptors to signaling pathways. Participates in signaling downstream of the angiopoietin receptor TEK/TIE2, and plays a role in the regulation of endothelial cell migration and sprouting angiogenesis. Participates in a signaling cascade initiated by activated KIT and KITLG/SCF. Isoform p47Shc and isoform p52Shc, once phosphorylated, couple activated receptor kinases to Ras via the recruitment of the GRB2/SOS complex and are implicated in the cytoplasmic propagation of mitogenic signals. Isoform p47Shc and isoform p52 may thus function as initiators of the Ras signaling cascade in various non-neuronal systems. Isoform p66Shc does not mediate Ras activation, but is involved in signal transduction pathways that regulate the cellular response to oxidative stress and life span. Isoform p66Shc acts as a downstream target of the tumor suppressor p53 and is indispensable for the ability of stress-activated p53 to induce elevation of intracellular oxidants, cytochrome c release and apoptosis. The expression of isoform p66Shc has been correlated with life span. This chain is SHC-transforming protein 1 (Shc1), found in Mus musculus (Mouse).